A 146-amino-acid polypeptide reads, in one-letter code: Putative pre-16S rRNA nuclease (146 aa).

This sequence belongs to the YqgF nuclease family.

Its subcellular location is the cytoplasm. In terms of biological role, could be a nuclease involved in processing of the 5'-end of pre-16S rRNA. This Dechloromonas aromatica (strain RCB) protein is Putative pre-16S rRNA nuclease.